Reading from the N-terminus, the 146-residue chain is 3-dehydroquinate dehydratase (146 aa).

Tyr-23 serves as the catalytic Proton acceptor. Asn-74, His-80, and Asp-87 together coordinate substrate. His-100 functions as the Proton donor in the catalytic mechanism. Residues 101 to 102 (IS) and Arg-111 contribute to the substrate site.

It belongs to the type-II 3-dehydroquinase family. As to quaternary structure, homododecamer.

The catalysed reaction is 3-dehydroquinate = 3-dehydroshikimate + H2O. It participates in metabolic intermediate biosynthesis; chorismate biosynthesis; chorismate from D-erythrose 4-phosphate and phosphoenolpyruvate: step 3/7. Functionally, catalyzes a trans-dehydration via an enolate intermediate. The chain is 3-dehydroquinate dehydratase from Bacillus cereus (strain AH820).